A 319-amino-acid polypeptide reads, in one-letter code: Ribonuclease Z (319 aa).

Zn(2+) contacts are provided by His62, His64, Asp66, His67, His145, Asp216, and His274. The active-site Proton acceptor is Asp66.

The protein belongs to the RNase Z family. In terms of assembly, homodimer. Zn(2+) serves as cofactor.

The catalysed reaction is Endonucleolytic cleavage of RNA, removing extra 3' nucleotides from tRNA precursor, generating 3' termini of tRNAs. A 3'-hydroxy group is left at the tRNA terminus and a 5'-phosphoryl group is left at the trailer molecule.. Its function is as follows. Zinc phosphodiesterase, which displays some tRNA 3'-processing endonuclease activity. Probably involved in tRNA maturation, by removing a 3'-trailer from precursor tRNA. In Parasynechococcus marenigrum (strain WH8102), this protein is Ribonuclease Z.